Consider the following 258-residue polypeptide: Alpha-hydroxynitrile lyase (258 aa).

Active-site proton donor/acceptor residues include S81 and H236.

Belongs to the AB hydrolase superfamily. Hydroxynitrile lyase family. As to quaternary structure, homodimer.

It catalyses the reaction (R)-mandelonitrile = benzaldehyde + hydrogen cyanide. Its function is as follows. Involved in cyanogenesis, the release of HCN from injured tissues. Displays R-selective hydroxynitrile lyase activity. Also accepts nitromethane (MeNO2) as a donor in a reaction with aromatic aldehydes to yield (R)-beta-nitro alcohols. This chain is Alpha-hydroxynitrile lyase, found in Arabidopsis thaliana (Mouse-ear cress).